The following is a 264-amino-acid chain: DNA repair protein RecO (264 aa).

Belongs to the RecO family.

Its function is as follows. Involved in DNA repair and RecF pathway recombination. The sequence is that of DNA repair protein RecO from Chlorobium luteolum (strain DSM 273 / BCRC 81028 / 2530) (Pelodictyon luteolum).